The chain runs to 49 residues: Peridinin-chlorophyll a-binding protein (49 aa).

As to quaternary structure, monomer. Post-translationally, binds 12 peridinin and 2 chlorophyll a molecules per monomer.

It localises to the plastid. The protein resides in the chloroplast. In terms of biological role, water-soluble antenna for capture of solar energy in the blue-green range. Peridinin is an asymmetric carotenoid. The protein is Peridinin-chlorophyll a-binding protein of Alexandrium cohorticula (Dinoflagellate).